Consider the following 358-residue polypeptide: Dynein axonemal assembly factor 10 (358 aa).

WD repeat units follow at residues 64–106 (EKPK…TPVY), 116–155 (NCIDGVGGVGIGDGAPEIVTGSRDGTVKVWDPRQKDTPVA), 163–206 (EAKR…VRWE), 208–250 (NIKN…PTKG), 258–298 (AHKS…QRSR), and 320–358 (LSTQPISSLDWSPDKKGLCVCTSFDQTVRVLIVTKLNRL).

In terms of assembly, interacts with PIH1D1; the interaction associates DNAAF10 with the R2TP complex. Interacts with several dynein axonemal assembly factors.

It is found in the dynein axonemal particle. Functionally, key assembly factor specifically required for the stability of axonemal dynein heavy chains in cytoplasm. The polypeptide is Dynein axonemal assembly factor 10 (dnaaf10) (Xenopus laevis (African clawed frog)).